The primary structure comprises 251 residues: 3-deoxy-manno-octulosonate cytidylyltransferase (251 aa).

Belongs to the KdsB family.

The protein localises to the cytoplasm. It carries out the reaction 3-deoxy-alpha-D-manno-oct-2-ulosonate + CTP = CMP-3-deoxy-beta-D-manno-octulosonate + diphosphate. Its pathway is nucleotide-sugar biosynthesis; CMP-3-deoxy-D-manno-octulosonate biosynthesis; CMP-3-deoxy-D-manno-octulosonate from 3-deoxy-D-manno-octulosonate and CTP: step 1/1. The protein operates within bacterial outer membrane biogenesis; lipopolysaccharide biosynthesis. Functionally, activates KDO (a required 8-carbon sugar) for incorporation into bacterial lipopolysaccharide in Gram-negative bacteria. The polypeptide is 3-deoxy-manno-octulosonate cytidylyltransferase (Rhizobium etli (strain ATCC 51251 / DSM 11541 / JCM 21823 / NBRC 15573 / CFN 42)).